The sequence spans 250 residues: ATP synthase subunit a (250 aa).

Helical transmembrane passes span 29-49 (ASLF…FATS), 84-104 (FFPL…LGMF), 114-134 (IIVT…YGFY), 143-163 (VFVP…IEII), 193-213 (FVAS…LPLI), and 216-236 (VALT…FAVL).

This sequence belongs to the ATPase A chain family. In terms of assembly, F-type ATPases have 2 components, CF(1) - the catalytic core - and CF(0) - the membrane proton channel. CF(1) has five subunits: alpha(3), beta(3), gamma(1), delta(1), epsilon(1). CF(0) has three main subunits: a(1), b(2) and c(9-12). The alpha and beta chains form an alternating ring which encloses part of the gamma chain. CF(1) is attached to CF(0) by a central stalk formed by the gamma and epsilon chains, while a peripheral stalk is formed by the delta and b chains.

Its subcellular location is the cell inner membrane. Key component of the proton channel; it plays a direct role in the translocation of protons across the membrane. The sequence is that of ATP synthase subunit a from Rhizobium etli (strain CIAT 652).